We begin with the raw amino-acid sequence, 500 residues long: MAKAKKQPRPKAITPKGFRDYFGEEVTQRTHMLATIAEVYHHYGFEALESSAVETVEALGKFLPDVDRPNEGVFAWQEAEDDGKGDWMALRYDLTAPLARVYAQHRNDLPSPYRRYAMGPVWRNEKPGPGRFRQFYQCDADTVGTASMAADAEICMMLSDTLEKVGIPRGDYLVRVNNRKVLNGVLEAMGLLEDDPKRDDVLRTIDKFDKVGESGVRELLGKGRLDASGAYIDGVGLEDHQAEPVLAFLTSKGDTVTETMTNLRAAVGDSKVGQEGIAELELMGSLFAAAGYGEDRILIDPSIVRGLGYYTGPVFEAELTFEIFDEKGRKRQFGSVAGGGRYDGLVKRFTGQEVPAVGLSIGVDRLLAALREKGRLAATPTGPVVVTVMDRDRMADYQAMVAELRQAGIRAEVYLGNPKNFGNQLKYADKRHSPIAVIEGGDEKDRGVVQIKDLILGAKIAESATLEEWKERPSQFEVPRTELVAKVREILVSQSSDREG.

Belongs to the class-II aminoacyl-tRNA synthetase family. In terms of assembly, homodimer.

The protein localises to the cytoplasm. It carries out the reaction tRNA(His) + L-histidine + ATP = L-histidyl-tRNA(His) + AMP + diphosphate + H(+). This is Histidine--tRNA ligase from Ruegeria sp. (strain TM1040) (Silicibacter sp.).